Reading from the N-terminus, the 430-residue chain is Tol-Pal system protein TolB (430 aa).

Positions 1 to 21 are cleaved as a signal peptide; that stretch reads MKQAFRVALGFFLLWASVLHA.

This sequence belongs to the TolB family. As to quaternary structure, the Tol-Pal system is composed of five core proteins: the inner membrane proteins TolA, TolQ and TolR, the periplasmic protein TolB and the outer membrane protein Pal. They form a network linking the inner and outer membranes and the peptidoglycan layer.

It is found in the periplasm. Part of the Tol-Pal system, which plays a role in outer membrane invagination during cell division and is important for maintaining outer membrane integrity. TolB occupies a key intermediary position in the Tol-Pal system because it communicates directly with both membrane-embedded components, Pal in the outer membrane and TolA in the inner membrane. This chain is Tol-Pal system protein TolB, found in Sodalis glossinidius (strain morsitans).